A 917-amino-acid chain; its full sequence is Auxin response factor 17 (917 aa).

Residues 134–236 (FCKTLTASDT…QLLLGIRRAN (103 aa)) constitute a DNA-binding region (TF-B3). Residues 571–649 (SVPNALSPFS…RPTAVPVPDP (79 aa)) are disordered. 2 stretches are compositionally biased toward low complexity: residues 576–594 (LSPF…MTLQ) and 604–620 (SYPD…NTST). The PB1 domain maps to 786-870 (ATFVKVYKSG…SCIKILSPQE (85 aa)).

The protein belongs to the ARF family. As to quaternary structure, homodimers and heterodimers.

It is found in the nucleus. Its function is as follows. Auxin response factors (ARFs) are transcriptional factors that bind specifically to the DNA sequence 5'-TGTCTC-3' found in the auxin-responsive promoter elements (AuxREs). This chain is Auxin response factor 17 (ARF17), found in Oryza sativa subsp. indica (Rice).